A 51-amino-acid polypeptide reads, in one-letter code: Insulin-2 (51 aa).

3 cysteine pairs are disulfide-bonded: cysteine 8/cysteine 37, cysteine 20/cysteine 50, and cysteine 36/cysteine 41.

This sequence belongs to the insulin family. As to quaternary structure, heterodimer of a B chain and an A chain linked by two disulfide bonds.

It is found in the secreted. Insulin decreases blood glucose concentration. It increases cell permeability to monosaccharides, amino acids and fatty acids. It accelerates glycolysis, the pentose phosphate cycle, and glycogen synthesis in liver. This Katsuwonus pelamis (Skipjack tuna) protein is Insulin-2.